We begin with the raw amino-acid sequence, 340 residues long: Mitochondrial import receptor subunit TOM40 homolog 2 (340 aa).

The disordered stretch occupies residues 1–37; sequence MGNVMASTADAESSRGRGHLSAGLRLPEAPQYSGGVP.

This sequence belongs to the Tom40 family. Forms part of the preprotein translocase of the outer mitochondrial membrane (TOM complex). Interacts with mitochondrial targeting sequences. In terms of tissue distribution, only expressed in the male germline, detected in primary spermatocytes as well as post-meiotic stages. Not detected in stem cells and spermatogonia near the tip of the testis.

The protein resides in the mitochondrion outer membrane. Functionally, channel-forming protein essential for import of protein precursors into mitochondria. The polypeptide is Mitochondrial import receptor subunit TOM40 homolog 2 (Drosophila melanogaster (Fruit fly)).